A 673-amino-acid chain; its full sequence is Auxin response factor 9 (673 aa).

The segment at residues 126-228 is a DNA-binding region (TF-B3); sequence FCKTLTASDT…ELRVGVRRLM (103 aa). Disordered stretches follow at residues 356–386 and 514–545; these read ELEP…PSVV and DSDQ…QSRQ. The segment covering 516 to 545 has biased composition (polar residues); sequence DQISQPSNGNKSDAPGTSSERSPLESQSRQ. A PB1 domain is found at 547–639; that stretch reads RSCTKVIMQG…EEAKLLAPKS (93 aa).

The protein belongs to the ARF family. Homodimers and heterodimers. As to expression, expressed in roots, culms, leaves and young panicles.

Its subcellular location is the nucleus. Functionally, auxin response factors (ARFs) are transcriptional factors that bind specifically to the DNA sequence 5'-TGTCTC-3' found in the auxin-responsive promoter elements (AuxREs). The sequence is that of Auxin response factor 9 (ARF9) from Oryza sativa subsp. japonica (Rice).